Here is a 543-residue protein sequence, read N- to C-terminus: CTP synthase (543 aa).

Positions 1-265 (MTRYIFVTGG…DDYVVERFGL (265 aa)) are amidoligase domain. Position 13 (serine 13) interacts with CTP. Serine 13 is a binding site for UTP. Residues 14–19 (SLGKGI) and aspartate 71 each bind ATP. 2 residues coordinate Mg(2+): aspartate 71 and glutamate 139. Residues 146-148 (DIE), 186-191 (KTKPTQ), and lysine 222 contribute to the CTP site. Residues 186–191 (KTKPTQ) and lysine 222 contribute to the UTP site. The 252-residue stretch at 290-541 (NIAMVGKYME…VNAALEYKAK (252 aa)) folds into the Glutamine amidotransferase type-1 domain. L-glutamine is bound at residue glycine 351. Catalysis depends on cysteine 378, which acts as the Nucleophile; for glutamine hydrolysis. L-glutamine-binding positions include 379 to 382 (LGMQ), glutamate 402, and arginine 469. Active-site residues include histidine 514 and glutamate 516.

This sequence belongs to the CTP synthase family. In terms of assembly, homotetramer.

The enzyme catalyses UTP + L-glutamine + ATP + H2O = CTP + L-glutamate + ADP + phosphate + 2 H(+). It carries out the reaction L-glutamine + H2O = L-glutamate + NH4(+). It catalyses the reaction UTP + NH4(+) + ATP = CTP + ADP + phosphate + 2 H(+). Its pathway is pyrimidine metabolism; CTP biosynthesis via de novo pathway; CTP from UDP: step 2/2. Allosterically activated by GTP, when glutamine is the substrate; GTP has no effect on the reaction when ammonia is the substrate. The allosteric effector GTP functions by stabilizing the protein conformation that binds the tetrahedral intermediate(s) formed during glutamine hydrolysis. Inhibited by the product CTP, via allosteric rather than competitive inhibition. Catalyzes the ATP-dependent amination of UTP to CTP with either L-glutamine or ammonia as the source of nitrogen. Regulates intracellular CTP levels through interactions with the four ribonucleotide triphosphates. The chain is CTP synthase from Stutzerimonas stutzeri (strain A1501) (Pseudomonas stutzeri).